We begin with the raw amino-acid sequence, 453 residues long: Tubulin alpha-1 chain (453 aa).

The GTP site is built by Q11, E71, G144, T145, T179, N206, and N228. E71 is a Mg(2+) binding site. Residue E254 is part of the active site. A disordered region spans residues 433–453; sequence EEVGAETADGDGEEEEFGEEY.

The protein belongs to the tubulin family. Dimer of alpha and beta chains. A typical microtubule is a hollow water-filled tube with an outer diameter of 25 nm and an inner diameter of 15 nM. Alpha-beta heterodimers associate head-to-tail to form protofilaments running lengthwise along the microtubule wall with the beta-tubulin subunit facing the microtubule plus end conferring a structural polarity. Microtubules usually have 13 protofilaments but different protofilament numbers can be found in some organisms and specialized cells. Mg(2+) is required as a cofactor. Post-translationally, undergoes a tyrosination/detyrosination cycle, the cyclic removal and re-addition of a C-terminal tyrosine residue by the enzymes tubulin tyrosine carboxypeptidase (TTCP) and tubulin tyrosine ligase (TTL), respectively.

The protein localises to the cytoplasm. The protein resides in the cytoskeleton. It carries out the reaction GTP + H2O = GDP + phosphate + H(+). Tubulin is the major constituent of microtubules, a cylinder consisting of laterally associated linear protofilaments composed of alpha- and beta-tubulin heterodimers. Microtubules grow by the addition of GTP-tubulin dimers to the microtubule end, where a stabilizing cap forms. Below the cap, tubulin dimers are in GDP-bound state, owing to GTPase activity of alpha-tubulin. The protein is Tubulin alpha-1 chain (TUBA1) of Pelvetia fastigiata (Brown alga).